We begin with the raw amino-acid sequence, 31 residues long: Cycloviolacin-O25 (31 aa).

Positions 1–31 form a cross-link, cyclopeptide (Asp-Asn); sequence DIFCGETCAFIPCITHVPGTCSCKSKVCYFN. Intrachain disulfides connect C4–C21, C8–C23, and C13–C28.

Post-translationally, this is a cyclic peptide. In terms of tissue distribution, expressed in roots and runners but not in leaves, petals and petioles (at protein level).

Probably participates in a plant defense mechanism. The protein is Cycloviolacin-O25 of Viola odorata (Sweet violet).